Reading from the N-terminus, the 256-residue chain is MLNLENKTYVIMGIANKRSIAFGVAKVLDQLGAKLVFTYRKERSRKELEKLLEQLNQPEAHLYQIDVQSDEEVINGFEQIGKDVGNIDGVYHSIAFANMEDLRGRFSETSREGFLLAQDISSYSLTIVAHEAKKLMPEGGSIVATTYLGGEFAVQNYNVMGVAKASLEANVKYLALDLGPDNIRVNAISAGPIRTLSAKGVGGFNTILKEIEERAPLKRNVDQVEVGKTAAYLLSDLSSGVTGENIHVDSGFHAIK.

NADP(+) is bound by residues Gly-13, 19–20, 40–44, 66–67, and Ile-94; these read SI, RKERS, and DV. Ala-97 is a binding site for substrate. Catalysis depends on proton acceptor residues Tyr-147 and Tyr-157. Residues Lys-164 and 193-197 contribute to the NADP(+) site; that span reads IRTLS.

The protein belongs to the short-chain dehydrogenases/reductases (SDR) family. FabI subfamily. As to quaternary structure, homotetramer.

It carries out the reaction a 2,3-saturated acyl-[ACP] + NADP(+) = a (2E)-enoyl-[ACP] + NADPH + H(+). It participates in lipid metabolism; fatty acid biosynthesis. In terms of biological role, catalyzes the reduction of a carbon-carbon double bond in an enoyl moiety that is covalently linked to an acyl carrier protein (ACP). Involved in the elongation cycle of fatty acid which are used in the lipid metabolism. The sequence is that of Enoyl-[acyl-carrier-protein] reductase [NADPH] FabI (fabI) from Staphylococcus aureus (strain MRSA252).